The primary structure comprises 396 residues: Putative glycosyltransferase HOC1 (396 aa).

The Cytoplasmic portion of the chain corresponds to 2–13 (AKTTKRASSFRR). The chain crosses the membrane as a helical; Signal-anchor for type II membrane protein span at residues 14-34 (LMIFAIIALISLAFGVRYLFH). Residues 35-396 (NSNATDLQKI…WKNTPKVEQK (362 aa)) lie on the Lumenal side of the membrane. Asn-37 is a glycosylation site (N-linked (GlcNAc...) asparagine).

This sequence belongs to the glycosyltransferase 32 family. As to quaternary structure, component of the M-Pol II complex composed of ANP1, MNN9, MNN10, MNN11 and HOC1.

The protein localises to the golgi apparatus. It is found in the cis-Golgi network membrane. Functionally, the M-Pol II complex possesses alpha-1,6-mannosyltransferase activity and is probably involved in the elongation of the mannan backbone of N-linked glycans on cell wall and periplasmic proteins. The chain is Putative glycosyltransferase HOC1 (HOC1) from Saccharomyces cerevisiae (strain ATCC 204508 / S288c) (Baker's yeast).